We begin with the raw amino-acid sequence, 145 residues long: Basic phospholipase A2 beta-bungarotoxin A2 chain (145 aa).

The signal sequence occupies residues 1 to 17 (MLIFLWCGAVCVSLLGA). A propeptide spanning residues 18–25 (ANIPPHPL) is cleaved from the precursor. Intrachain disulfides connect Cys-52-Cys-144, Cys-54-Cys-70, Cys-69-Cys-125, Cys-76-Cys-118, Cys-86-Cys-111, and Cys-104-Cys-116. Ca(2+) contacts are provided by Tyr-53, Gly-55, and Gly-57. The active site involves His-73. Asp-74 is a binding site for Ca(2+). Residue Asp-119 is part of the active site.

The protein belongs to the phospholipase A2 family. Group I subfamily. D49 sub-subfamily. Heterodimer; disulfide-linked. The A chains have phospholipase A2 activity and the B chains show homology with the basic protease inhibitors. The A2 chain is found in beta-3 and beta-4 bungarotoxins. Requires Ca(2+) as cofactor. As to expression, expressed by the venom gland.

It is found in the secreted. The catalysed reaction is a 1,2-diacyl-sn-glycero-3-phosphocholine + H2O = a 1-acyl-sn-glycero-3-phosphocholine + a fatty acid + H(+). Snake venom phospholipase A2 (PLA2) that inhibits neuromuscular transmission by blocking acetylcholine release from the nerve termini. PLA2 catalyzes the calcium-dependent hydrolysis of the 2-acyl groups in 3-sn-phosphoglycerides. The chain is Basic phospholipase A2 beta-bungarotoxin A2 chain from Bungarus multicinctus (Many-banded krait).